The chain runs to 93 residues: Putative defensin-like protein 283 (93 aa).

An N-terminal signal peptide occupies residues Met-1–Ala-24. Disulfide bonds link Cys-43–Cys-83, Cys-66–Cys-90, and Cys-72–Cys-92.

The protein belongs to the DEFL family.

Its subcellular location is the secreted. In Arabidopsis thaliana (Mouse-ear cress), this protein is Putative defensin-like protein 283.